A 295-amino-acid chain; its full sequence is Probable cell division protein WhiA (295 aa).

A DNA-binding region (H-T-H motif) is located at residues 262–293 (SLRELGKKLNLTKSQIYSKLKRIIKIAERFGD).

Belongs to the WhiA family.

Its function is as follows. Involved in cell division and chromosome segregation. The chain is Probable cell division protein WhiA from Thermotoga maritima (strain ATCC 43589 / DSM 3109 / JCM 10099 / NBRC 100826 / MSB8).